The primary structure comprises 208 residues: uncharacterized protein (208 aa).

The span at 1–18 shows a compositional bias: basic and acidic residues; the sequence is MSPTKDSHPSPHFPRDSG. Disordered stretches follow at residues 1-122 and 135-208; these read MSPT…LPPP and RECH…TPDG.

This is an uncharacterized protein from Homo sapiens (Human).